We begin with the raw amino-acid sequence, 505 residues long: Mannosylglucosyl-3-phosphoglycerate synthase (505 aa).

Monomer in solution.

The catalysed reaction is (2R)-2-O-(alpha-D-glucopyranosyl)-3-phospho-glycerate + GDP-alpha-D-mannose = (2R)-2-O-[alpha-D-mannopyranosyl-(1-&gt;2)-alpha-D-glucopyranosyl]-3-phospho-glycerate + GDP + H(+). Not strictly dependent on divalent cations, but the presence of Mn(2+), Ca(2+), Mg(2+) or Co(2+) stimulates activity. Functionally, involved in the biosynthesis of the compatible solute mannosylglucosylglycerate through a phosphorylating pathway. Catalyzes the conversion of glucosyl-3-phosphoglycerate (GPG) to mannosylglucosyl-3-phosphoglycerate (MGPG). This Petrotoga mobilis (strain DSM 10674 / SJ95) protein is Mannosylglucosyl-3-phosphoglycerate synthase.